Reading from the N-terminus, the 342-residue chain is Anthranilate phosphoribosyltransferase (342 aa).

5-phospho-alpha-D-ribose 1-diphosphate-binding positions include glycine 83, 86–87 (GD), threonine 91, 93–96 (NIST), 111–119 (KHGGRSVSS), and serine 123. Glycine 83 is a binding site for anthranilate. Serine 95 is a binding site for Mg(2+). Arginine 169 is an anthranilate binding site. Residues aspartate 228 and glutamate 229 each coordinate Mg(2+).

It belongs to the anthranilate phosphoribosyltransferase family. Homodimer. Mg(2+) is required as a cofactor.

It carries out the reaction N-(5-phospho-beta-D-ribosyl)anthranilate + diphosphate = 5-phospho-alpha-D-ribose 1-diphosphate + anthranilate. It functions in the pathway amino-acid biosynthesis; L-tryptophan biosynthesis; L-tryptophan from chorismate: step 2/5. Its function is as follows. Catalyzes the transfer of the phosphoribosyl group of 5-phosphorylribose-1-pyrophosphate (PRPP) to anthranilate to yield N-(5'-phosphoribosyl)-anthranilate (PRA). This chain is Anthranilate phosphoribosyltransferase, found in Laribacter hongkongensis (strain HLHK9).